Reading from the N-terminus, the 44-residue chain is Cuticle protein CP466 (44 aa).

2 consecutive repeat copies span residues 3-20 (LLEG…KKYL) and 27-44 (VLLT…NVQF).

In terms of tissue distribution, calcified shell.

In Cancer pagurus (Rock crab), this protein is Cuticle protein CP466.